Consider the following 545-residue polypeptide: CTP synthase (545 aa).

The tract at residues 1–265 (MNGIKHIFIT…DKFVIKHLDL (265 aa)) is amidoligase domain. Ser15 contacts CTP. UTP is bound at residue Ser15. Residues 16–21 (SIGKGL) and Asp73 each bind ATP. The Mg(2+) site is built by Asp73 and Glu141. CTP-binding positions include 148-150 (DIE), 188-193 (KTKPTQ), and Lys224. UTP-binding positions include 188 to 193 (KTKPTQ) and Lys224. Residues 290–534 (EIAIIGKYTG…VAAALARKEI (245 aa)) enclose the Glutamine amidotransferase type-1 domain. Gly349 serves as a coordination point for L-glutamine. Cys376 (nucleophile; for glutamine hydrolysis) is an active-site residue. Residues 377-380 (LGMQ), Glu400, and Arg460 each bind L-glutamine. Residues His507 and Glu509 contribute to the active site.

This sequence belongs to the CTP synthase family. In terms of assembly, homotetramer.

It carries out the reaction UTP + L-glutamine + ATP + H2O = CTP + L-glutamate + ADP + phosphate + 2 H(+). The catalysed reaction is L-glutamine + H2O = L-glutamate + NH4(+). The enzyme catalyses UTP + NH4(+) + ATP = CTP + ADP + phosphate + 2 H(+). The protein operates within pyrimidine metabolism; CTP biosynthesis via de novo pathway; CTP from UDP: step 2/2. With respect to regulation, allosterically activated by GTP, when glutamine is the substrate; GTP has no effect on the reaction when ammonia is the substrate. The allosteric effector GTP functions by stabilizing the protein conformation that binds the tetrahedral intermediate(s) formed during glutamine hydrolysis. Inhibited by the product CTP, via allosteric rather than competitive inhibition. In terms of biological role, catalyzes the ATP-dependent amination of UTP to CTP with either L-glutamine or ammonia as the source of nitrogen. Regulates intracellular CTP levels through interactions with the four ribonucleotide triphosphates. In Tropheryma whipplei (strain Twist) (Whipple's bacillus), this protein is CTP synthase.